Here is a 250-residue protein sequence, read N- to C-terminus: Triosephosphate isomerase (250 aa).

9 to 11 (NWK) contacts substrate. H95 acts as the Electrophile in catalysis. The active-site Proton acceptor is the E167. Residues G173, S212, and 233–234 (GG) contribute to the substrate site.

Belongs to the triosephosphate isomerase family. As to quaternary structure, homodimer.

It is found in the cytoplasm. The catalysed reaction is D-glyceraldehyde 3-phosphate = dihydroxyacetone phosphate. It functions in the pathway carbohydrate biosynthesis; gluconeogenesis. The protein operates within carbohydrate degradation; glycolysis; D-glyceraldehyde 3-phosphate from glycerone phosphate: step 1/1. Involved in the gluconeogenesis. Catalyzes stereospecifically the conversion of dihydroxyacetone phosphate (DHAP) to D-glyceraldehyde-3-phosphate (G3P). This is Triosephosphate isomerase from Nitrosococcus oceani (strain ATCC 19707 / BCRC 17464 / JCM 30415 / NCIMB 11848 / C-107).